The sequence spans 102 residues: Defensin-like protein 285 (102 aa).

Residues 1-28 form the signal peptide; sequence MTNLYFKTAFLLSLLLLSFSYQSKLIEA. 4 disulfide bridges follow: Cys39–Cys100, Cys64–Cys83, Cys70–Cys88, and Cys75–Cys90.

Belongs to the DEFL family.

It is found in the secreted. The protein is Defensin-like protein 285 of Arabidopsis thaliana (Mouse-ear cress).